The sequence spans 353 residues: Probable tRNA pseudouridine synthase B (353 aa).

The Nucleophile role is filled by Asp45. The PUA domain maps to 211–287 (YPKIVAKKSA…DHIFVEAKHG (77 aa)). Residues 292 to 353 (VRDREKDVQR…TGVHRRPGSH (62 aa)) are disordered. Residues 309–328 (NIRDAAHGPDSRTGRGRKET) show a composition bias toward basic and acidic residues. Residues 336 to 353 (RVRKLQNKTGVHRRPGSH) show a composition bias toward basic residues.

The protein belongs to the pseudouridine synthase TruB family. Type 2 subfamily.

The enzyme catalyses uridine(55) in tRNA = pseudouridine(55) in tRNA. Its function is as follows. Could be responsible for synthesis of pseudouridine from uracil-55 in the psi GC loop of transfer RNAs. The chain is Probable tRNA pseudouridine synthase B from Thermoplasma volcanium (strain ATCC 51530 / DSM 4299 / JCM 9571 / NBRC 15438 / GSS1).